We begin with the raw amino-acid sequence, 486 residues long: Malonate-semialdehyde dehydrogenase 2 (486 aa).

Residues F154, K178, E181, R182, and S231 each contribute to the NAD(+) site. C286 functions as the Nucleophile in the catalytic mechanism. E385 provides a ligand contact to NAD(+).

This sequence belongs to the aldehyde dehydrogenase family. IolA subfamily. As to quaternary structure, homotetramer.

The catalysed reaction is 3-oxopropanoate + NAD(+) + CoA + H2O = hydrogencarbonate + acetyl-CoA + NADH + H(+). It carries out the reaction 2-methyl-3-oxopropanoate + NAD(+) + CoA + H2O = propanoyl-CoA + hydrogencarbonate + NADH + H(+). Its pathway is polyol metabolism; myo-inositol degradation into acetyl-CoA; acetyl-CoA from myo-inositol: step 7/7. In terms of biological role, catalyzes the oxidation of malonate semialdehyde (MSA) and methylmalonate semialdehyde (MMSA) into acetyl-CoA and propanoyl-CoA, respectively. Is involved in a myo-inositol catabolic pathway. Bicarbonate, and not CO2, is the end-product of the enzymatic reaction. This Shouchella clausii (strain KSM-K16) (Alkalihalobacillus clausii) protein is Malonate-semialdehyde dehydrogenase 2.